The chain runs to 186 residues: Low amplitude and bright protein LabA (186 aa).

Functionally, functions in an output pathway of the circadian clock. One of three clock output pathways. Involved in negative feedback regulation of KaiC; deletion leads to overexpression of KaiC protein and decreases the amplitude of the circadian response. Overexpression reduces the expression of circadian genes. In Synechococcus elongatus (strain ATCC 33912 / PCC 7942 / FACHB-805) (Anacystis nidulans R2), this protein is Low amplitude and bright protein LabA.